A 122-amino-acid polypeptide reads, in one-letter code: Large ribosomal subunit protein uL14 (122 aa).

It belongs to the universal ribosomal protein uL14 family. As to quaternary structure, part of the 50S ribosomal subunit. Forms a cluster with proteins L3 and L19. In the 70S ribosome, L14 and L19 interact and together make contacts with the 16S rRNA in bridges B5 and B8.

In terms of biological role, binds to 23S rRNA. Forms part of two intersubunit bridges in the 70S ribosome. The chain is Large ribosomal subunit protein uL14 from Clostridium botulinum (strain Alaska E43 / Type E3).